Consider the following 93-residue polypeptide: Putative pterin-4-alpha-carbinolamine dehydratase (93 aa).

Belongs to the pterin-4-alpha-carbinolamine dehydratase family.

The enzyme catalyses (4aS,6R)-4a-hydroxy-L-erythro-5,6,7,8-tetrahydrobiopterin = (6R)-L-erythro-6,7-dihydrobiopterin + H2O. The sequence is that of Putative pterin-4-alpha-carbinolamine dehydratase from Synechococcus sp. (strain WH7803).